Here is a 341-residue protein sequence, read N- to C-terminus: Adenylosuccinate synthetase (341 aa).

GTP-binding positions include 12–18 (GDEGKGK) and 42–44 (GHS). The Proton acceptor role is filled by aspartate 13. Aspartate 13 and glycine 42 together coordinate Mg(2+). IMP-binding positions include 13 to 16 (DEGK), 40 to 43 (NAGH), threonine 127, arginine 141, glutamine 179, threonine 194, and arginine 256. The active-site Proton donor is the histidine 43. 252-258 (VVTGRKR) serves as a coordination point for substrate. Residues arginine 258, 284-286 (CID), and 324-326 (STG) contribute to the GTP site.

This sequence belongs to the adenylosuccinate synthetase family. Homodimer. Mg(2+) serves as cofactor.

It is found in the cytoplasm. It carries out the reaction IMP + L-aspartate + GTP = N(6)-(1,2-dicarboxyethyl)-AMP + GDP + phosphate + 2 H(+). The protein operates within purine metabolism; AMP biosynthesis via de novo pathway; AMP from IMP: step 1/2. In terms of biological role, plays an important role in the de novo pathway of purine nucleotide biosynthesis. Catalyzes the first committed step in the biosynthesis of AMP from IMP. The sequence is that of Adenylosuccinate synthetase from Methanosphaera stadtmanae (strain ATCC 43021 / DSM 3091 / JCM 11832 / MCB-3).